The following is a 355-amino-acid chain: Galectin-9 (355 aa).

Galectin domains follow at residues 17 to 148 (FSGT…ISFQ) and 227 to 355 (FITT…HVQT). Residues asparagine 48, histidine 61, arginine 65, asparagine 75, 82-88 (WGPEERK), histidine 267, arginine 271, threonine 281, and 287-293 (WGSEERS) each bind a beta-D-galactoside.

Monomer. As to expression, peripheral blood leukocytes and lymphatic tissues. Expressed in lung, liver, breast and kidney with higher levels in tumor endothelial cells than normal endothelium (at protein level). Expressed in trophoblast cells in decidua and placenta in pregnancy (at protein level). Isoform 2 is the most abundant isoform expressed in endothelial cells. Upon endothelial cell activation isoform 2 expression decreases while expression of isoform 3 and isoform 5 increases. Isoform 4 decreases in pathological pregnancy.

The protein resides in the cytoplasm. The protein localises to the nucleus. It localises to the secreted. Binds galactosides. Has high affinity for the Forssman pentasaccharide. Ligand for HAVCR2/TIM3. Binding to HAVCR2 induces T-helper type 1 lymphocyte (Th1) death. Also stimulates bactericidal activity in infected macrophages by causing macrophage activation and IL1B secretion which restricts intracellular bacterial growth. Ligand for P4HB; the interaction retains P4HB at the cell surface of Th2 T-helper cells, increasing disulfide reductase activity at the plasma membrane, altering the plasma membrane redox state and enhancing cell migration. Ligand for CD44; the interaction enhances binding of SMAD3 to the FOXP3 promoter, leading to up-regulation of FOXP3 expression and increased induced regulatory T (iTreg) cell stability and suppressive function. Promotes ability of mesenchymal stromal cells to suppress T-cell proliferation. Expands regulatory T-cells and induces cytotoxic T-cell apoptosis following virus infection. Activates ERK1/2 phosphorylation inducing cytokine (IL-6, IL-8, IL-12) and chemokine (CCL2) production in mast and dendritic cells. Inhibits degranulation and induces apoptosis of mast cells. Induces maturation and migration of dendritic cells. Inhibits natural killer (NK) cell function. Can transform NK cell phenotype from peripheral to decidual during pregnancy. Astrocyte derived galectin-9 enhances microglial TNF production. May play a role in thymocyte-epithelial interactions relevant to the biology of the thymus. May provide the molecular basis for urate flux across cell membranes, allowing urate that is formed during purine metabolism to efflux from cells and serving as an electrogenic transporter that plays an important role in renal and gastrointestinal urate excretion. Highly selective to the anion urate. Its function is as follows. Acts as an eosinophil chemoattractant. It also inhibits angiogenesis. Suppresses IFNG production by natural killer cells. The sequence is that of Galectin-9 (LGALS9) from Homo sapiens (Human).